A 253-amino-acid chain; its full sequence is MATAKTIDLTGKVVREIELPDVFDVDYRPDLIKKAVLAAQANRLQPYGPRLYAGMETSARGWGSGRGTSHVPRLVNSSRAARVPHARGGRRAHPPKPEADRSEKVNTKERRYAIRSAIAATRDPTLVSLRGHIFEAELPIVTENALEDLDKTKQVIEFLQAIGVYEDVLRAKYGRHIRAGRGKLRGRKYKHKKSVLIVAGESAPILKAARNLSGVDVATVDSLNAELLAPGTHAGRLTIWTESAVEKLEGAFQ.

The tract at residues 61–107 is disordered; that stretch reads GWGSGRGTSHVPRLVNSSRAARVPHARGGRRAHPPKPEADRSEKVNT. Basic residues predominate over residues 82–94; sequence RVPHARGGRRAHP. The span at 95–107 shows a compositional bias: basic and acidic residues; it reads PKPEADRSEKVNT.

It belongs to the universal ribosomal protein uL4 family. Part of the 50S ribosomal subunit.

Its function is as follows. One of the primary rRNA binding proteins, this protein initially binds near the 5'-end of the 23S rRNA. It is important during the early stages of 50S assembly. It makes multiple contacts with different domains of the 23S rRNA in the assembled 50S subunit and ribosome. Forms part of the polypeptide exit tunnel. This is Large ribosomal subunit protein uL4 from Methanosarcina barkeri (strain Fusaro / DSM 804).